The primary structure comprises 331 residues: 6-phosphogluconolactonase (331 aa).

It belongs to the cycloisomerase 2 family.

It carries out the reaction 6-phospho-D-glucono-1,5-lactone + H2O = 6-phospho-D-gluconate + H(+). It functions in the pathway carbohydrate degradation; pentose phosphate pathway; D-ribulose 5-phosphate from D-glucose 6-phosphate (oxidative stage): step 2/3. Catalyzes the hydrolysis of 6-phosphogluconolactone to 6-phosphogluconate. This Salmonella arizonae (strain ATCC BAA-731 / CDC346-86 / RSK2980) protein is 6-phosphogluconolactonase.